The following is a 309-amino-acid chain: Transcription initiation factor IIB 1 (309 aa).

Repeat copies occupy residues 125–208 (NELE…LREL) and 219–300 (DYVT…ELTQ).

This sequence belongs to the TFIIB family.

Its function is as follows. Stabilizes TBP binding to an archaeal box-A promoter. Also responsible for recruiting RNA polymerase II to the pre-initiation complex (DNA-TBP-TFIIB). This is Transcription initiation factor IIB 1 from Saccharolobus solfataricus (strain ATCC 35092 / DSM 1617 / JCM 11322 / P2) (Sulfolobus solfataricus).